Consider the following 339-residue polypeptide: Dihydroorotate dehydrogenase (quinone) (339 aa).

Residues 64 to 68 (AGADK) and threonine 88 each bind FMN. A substrate-binding site is contributed by lysine 68. A substrate-binding site is contributed by 113-117 (NRNGF). FMN is bound by residues asparagine 141 and asparagine 174. Asparagine 174 contacts substrate. Residue serine 177 is the Nucleophile of the active site. Asparagine 179 provides a ligand contact to substrate. Residues lysine 219 and threonine 247 each contribute to the FMN site. 248–249 (NT) is a binding site for substrate. FMN contacts are provided by residues glycine 270, glycine 299, and 320-321 (YS).

Belongs to the dihydroorotate dehydrogenase family. Type 2 subfamily. Monomer. Requires FMN as cofactor.

The protein resides in the cell membrane. The enzyme catalyses (S)-dihydroorotate + a quinone = orotate + a quinol. It functions in the pathway pyrimidine metabolism; UMP biosynthesis via de novo pathway; orotate from (S)-dihydroorotate (quinone route): step 1/1. Functionally, catalyzes the conversion of dihydroorotate to orotate with quinone as electron acceptor. The chain is Dihydroorotate dehydrogenase (quinone) from Haemophilus influenzae (strain 86-028NP).